The primary structure comprises 607 residues: COMPASS component cclA (607 aa).

Residues 1-19 (MASTHAAGSPAPSSSINSP) are compositionally biased toward low complexity. 2 disordered regions span residues 1 to 22 (MAST…PILH) and 34 to 86 (GEGS…KSVA). The span at 57-69 (SKRNKRDSRKKRE) shows a compositional bias: basic residues. The 220-residue stretch at 157-376 (IADTDFPHIK…YAFNLKETPA (220 aa)) folds into the B30.2/SPRY domain. A disordered region spans residues 587-607 (NTPITDVPVPPEPEDTPMTGG).

Belongs to the cclA family. As to quaternary structure, component of the COMPASS complex.

The protein resides in the nucleus. It localises to the chromosome. Its subcellular location is the telomere. Its function is as follows. Component of the COMPASS (Set1C) complex that specifically mono-, di- and trimethylates histone H3 to form H3K4me1/2/3, which subsequently plays a role in telomere length maintenance and transcription elongation regulation. Controls the production of several secondary metabolites, including monodictyphenone, emodin and emodin derivatives, as well as two anti-osteoporosis polyketides, F9775A and F9775B. In Emericella nidulans (strain FGSC A4 / ATCC 38163 / CBS 112.46 / NRRL 194 / M139) (Aspergillus nidulans), this protein is COMPASS component cclA.